Consider the following 296-residue polypeptide: MDEQSLRKMVEQMVEQMVGGGTNVKSTTSTSSVGQGSATAISSECLPDITKIDIKSWFLLDHAKNKEEYLHMKSKTPARLGVGRAGARYKTMTMLRVRADHAAAQDAVFSDVSEEFIKKNKFVFVKTLCKDKDEYLTRPDLGRRFGKEELEVIKKTCGQSPKVLIIVGDGLSSSAIEANVEDMIPAIKQGLSMFQINVPPILFIKYARVGAMDDIGQATDADVICMLVGERPGLVTAESMSAYICYKAKHGVPESKRTVISNIHRGGTTPVEAGAHAAELIKKMLDKKASGIELKG.

Val-209 and Glu-230 together coordinate adenosylcob(III)alamin.

This sequence belongs to the EutC family. As to quaternary structure, the basic unit is a heterodimer which dimerizes to form tetramers. The heterotetramers trimerize; 6 large subunits form a core ring with 6 small subunits projecting outwards. The cofactor is adenosylcob(III)alamin.

The protein localises to the bacterial microcompartment. The enzyme catalyses ethanolamine = acetaldehyde + NH4(+). The protein operates within amine and polyamine degradation; ethanolamine degradation. In terms of biological role, catalyzes the deamination of various vicinal amino-alcohols to oxo compounds. Allows this organism to utilize ethanolamine as the sole source of nitrogen and carbon in the presence of external vitamin B12. This chain is Ethanolamine ammonia-lyase small subunit, found in Lachnoclostridium phytofermentans (strain ATCC 700394 / DSM 18823 / ISDg) (Clostridium phytofermentans).